We begin with the raw amino-acid sequence, 451 residues long: DNA polymerase delta subunit 3 (451 aa).

3 disordered regions span residues 187–241 (SQAK…AASS), 259–386 (KQTP…KVLR), and 404–451 (AWES…FAKK). Residues 200–216 (PSTSQVKEAPKASQTVE) are compositionally biased toward polar residues. Residues 225 to 241 (SAPAKKGSSAPKSAASS) are compositionally biased toward low complexity. Positions 306–316 (QREEELRRMME) are enriched in basic and acidic residues. Residues 329 to 353 (EEEEEEEEEEESEHEQLPAEEEPMA) show a composition bias toward acidic residues. Over residues 354–366 (EEPKAPEPVKEEP) the composition is skewed to basic and acidic residues. Basic residues predominate over residues 376–386 (GRRRGKRKVLR). The PIP-box signature appears at 441–448 (QGSIMSWF).

As to quaternary structure, component of the DNA polymerase delta complex which consists of PolD1, PolD2, PolD3 and PolD4, with PolD1 bearing DNA polymerase and 3' to 5' proofreading exonuclease activities. Directly interacts with PCNA.

The protein resides in the nucleus. Its function is as follows. Accessory component of the DNA polymerase delta complex. The complex is required for the maintenance of genome integrity, acting in concert with the sliding clamp processivity factor PCNA. The sequence is that of DNA polymerase delta subunit 3 from Chaetomium thermophilum (strain DSM 1495 / CBS 144.50 / IMI 039719) (Thermochaetoides thermophila).